The sequence spans 696 residues: MNLRPRCRKWLPLATQQLRLRNLNRIQGFNIESWPHEKSLELDDPDDVLLYYTLHTDKASEAFYTSEKLPQRHQQQKWAEICTDDEAWRKTNAQCVCVKVWKHYSAERRDGQPPEVEQRHKDVFGRSQLTPSRLPRPPELLFSWGVYFSGLIPLSPLTLSQCGRNCLVFQLNGEQFASPSMISEQALQSQLHLHYQKYAEEEKLEEPQDEGINSPAVSRSSSPVLRMSTMRYAQLKCQRQEIRRSNNLEKLLTLQRLQRLHQQKRRQMAEVCREIARLSVHCVTRNELRLKPRTTSLSGDYSAHQYHSMGRALSVLLAEQQQIAPLTLYNAQQLTRRIEALSSQQRLLKAERETFRQRNERTRQLLKEMREQREAQQWELHSQRHRLEKERLELRTLAPQHLEQRDQKRQIERQVERRMSTLVLELQEIYNIQNVGGRQFSICGIAFPHMEQYTSESRQAANAQLLDNVSPLAVSAALGYVAHLVQMLAIIMDRPLRNRILYEPSKARIVDDIKELTYTTREFPLYTRSILPSQQTKYAIYLLRQNVSQLCFDITGQCDLRNTFGNLLELFSTLRYIERTQRDEVDERDGTAVGAGCGEARLANGLTAPHLSQSHSSVDMNHVPLPTGVNAVKDALLQQLLPPGVSEALAIEGYASTQRICRSVGSYSDGEDEFRPRLEHNYSNSDSNITLQTERS.

A phosphoserine mark is found at Ser-214 and Ser-218. 2 coiled-coil regions span residues 251–278 (LLTLQRLQRLHQQKRRQMAEVCREIARL) and 330–394 (NAQQ…RLEL). At Ser-666 the chain carries Phosphoserine. The segment at 666–696 (SYSDGEDEFRPRLEHNYSNSDSNITLQTERS) is disordered. Tyr-667 is subject to Phosphotyrosine. A phosphoserine mark is found at Ser-668 and Ser-685. Residues 681-696 (NYSNSDSNITLQTERS) are compositionally biased toward polar residues.

Functionally, involved in biosynthetic vesicle transport to lysosomes. Acts as a cell growth regulator. Also has a crucial role in controlling organ rotation by regulating membrane-localized Notch receptor endocytosis and subsequent degradation. Regulation of organ rotation is not by induction of autophagy. This chain is UV radiation resistance-associated gene protein (Uvrag), found in Drosophila melanogaster (Fruit fly).